Reading from the N-terminus, the 245-residue chain is 3-deoxy-manno-octulosonate cytidylyltransferase (245 aa).

Belongs to the KdsB family.

The protein localises to the cytoplasm. The enzyme catalyses 3-deoxy-alpha-D-manno-oct-2-ulosonate + CTP = CMP-3-deoxy-beta-D-manno-octulosonate + diphosphate. The protein operates within nucleotide-sugar biosynthesis; CMP-3-deoxy-D-manno-octulosonate biosynthesis; CMP-3-deoxy-D-manno-octulosonate from 3-deoxy-D-manno-octulosonate and CTP: step 1/1. It participates in bacterial outer membrane biogenesis; lipopolysaccharide biosynthesis. Activates KDO (a required 8-carbon sugar) for incorporation into bacterial lipopolysaccharide in Gram-negative bacteria. This is 3-deoxy-manno-octulosonate cytidylyltransferase from Fusobacterium nucleatum subsp. nucleatum (strain ATCC 25586 / DSM 15643 / BCRC 10681 / CIP 101130 / JCM 8532 / KCTC 2640 / LMG 13131 / VPI 4355).